The chain runs to 376 residues: Chaperone protein DnaJ (376 aa).

Positions Asp-5–Gly-70 constitute a J domain. The CR-type zinc-finger motif lies at Gly-137–Glu-215. Zn(2+) contacts are provided by Cys-150, Cys-153, Cys-167, Cys-170, Cys-189, Cys-192, Cys-203, and Cys-206. CXXCXGXG motif repeat units lie at residues Cys-150–Gly-157, Cys-167–Gly-174, Cys-189–Gly-196, and Cys-203–Gly-210.

It belongs to the DnaJ family. Homodimer. Requires Zn(2+) as cofactor.

The protein resides in the cytoplasm. Functionally, participates actively in the response to hyperosmotic and heat shock by preventing the aggregation of stress-denatured proteins and by disaggregating proteins, also in an autonomous, DnaK-independent fashion. Unfolded proteins bind initially to DnaJ; upon interaction with the DnaJ-bound protein, DnaK hydrolyzes its bound ATP, resulting in the formation of a stable complex. GrpE releases ADP from DnaK; ATP binding to DnaK triggers the release of the substrate protein, thus completing the reaction cycle. Several rounds of ATP-dependent interactions between DnaJ, DnaK and GrpE are required for fully efficient folding. Also involved, together with DnaK and GrpE, in the DNA replication of plasmids through activation of initiation proteins. This is Chaperone protein DnaJ from Rhizobium leguminosarum bv. trifolii (strain WSM2304).